Here is a 289-residue protein sequence, read N- to C-terminus: MASGKEIKTKIASVQSTQKITKAMEMVATSKMRKTQDRMAASRPYSETIRNVISHVSKASIGYKHPFLMEREVKTVGMLVVSTDRGMCGGLNINLFKAVLNEIKKWKEQGVTVEVGVIGAKGIAFFRSLGFKIRAQHSGIGDNPSVEELLGIANDMFDAYKEDKIDALYLAHNQFINTMSQKPSVAQLVPLPELDTDNLDERQQVWDYLYEPEPKVLLDNLLTRYLESQVYQSVVDNLASEQAARMVAMKAATDNAGNLINDLQLVYNKARQASITNELNEIVAGAAAI.

This sequence belongs to the ATPase gamma chain family. As to quaternary structure, F-type ATPases have 2 components, CF(1) - the catalytic core - and CF(0) - the membrane proton channel. CF(1) has five subunits: alpha(3), beta(3), gamma(1), delta(1), epsilon(1). CF(0) has three main subunits: a, b and c.

The protein resides in the cell inner membrane. Produces ATP from ADP in the presence of a proton gradient across the membrane. The gamma chain is believed to be important in regulating ATPase activity and the flow of protons through the CF(0) complex. This is ATP synthase gamma chain from Actinobacillus succinogenes (strain ATCC 55618 / DSM 22257 / CCUG 43843 / 130Z).